We begin with the raw amino-acid sequence, 1987 residues long: Transcription factor 20 (1987 aa).

A compositionally biased stretch (polar residues) spans 1-22; it reads MQSFREQSSYHGNQQSYPQEVH. Disordered regions lie at residues 1 to 79, 96 to 432, 446 to 481, 502 to 816, and 844 to 891; these read MQSF…QGYQ, DTVA…GNVP, LSPT…DPGL, LLSD…GTAR, and PHWG…SLSE. The segment covering 51–74 has biased composition (low complexity); that stretch reads TGSSSSGRRGTAAAAAAMASETSG. Arg59 carries the omega-N-methylarginine modification. Over residues 121 to 142 the composition is skewed to polar residues; sequence QGSSFGNQYASEGHVSQFQAQH. Residues 163-205 show a composition bias toward low complexity; that stretch reads SAQYQQQASSQQQQQQQQQQQQQQQQQQQQVQQLRQQLYQSHQ. Over residues 206 to 235 the composition is skewed to polar residues; sequence PLPQTTGQPASGSSHLQPMQRPSTLPSSAG. Residues 248 to 277 are compositionally biased toward low complexity; it reads QSSASSSSSSSFPSPQRFSQSGQSYDGSYS. The span at 289–311 shows a compositional bias: polar residues; the sequence is VGSNAQAYGTQSNYSYQPQSMKN. Residue Lys316 forms a Glycyl lysine isopeptide (Lys-Gly) (interchain with G-Cter in SUMO2) linkage. A compositionally biased stretch (low complexity) spans 322 to 354; it reads QQGQQQQQQQPQPQQQQPQQQQQQQQQQQHPPQ. A compositionally biased stretch (polar residues) spans 357 to 377; the sequence is MQYTNAATKMPLQSQVGQYNQ. Residues 396-416 show a composition bias toward low complexity; it reads SNPSPAASVVQSPSCSSTPSP. Polar residues predominate over residues 417 to 432; sequence LMQSGENLQCGQGNVP. Residues 446–456 are compositionally biased toward low complexity; the sequence is LSPTPSMMPSP. 2 positions are modified to phosphoserine: Ser447 and Ser458. Composition is skewed to polar residues over residues 526–537, 566–576, and 585–605; these read SCTNSEGSSQPE, LSGQSTSSDTT, and AGSS…TSPA. Residues Ser567, Ser588, Ser603, and Ser612 each carry the phosphoserine modification. Over residues 618–627 the composition is skewed to polar residues; sequence TSLSSEGNTK. N6-acetyllysine is present on Lys631. Positions 645–657 are enriched in basic and acidic residues; it reads RVEKSGGQDKGSQ. Residues 666-682 show a composition bias toward polar residues; sequence RPPSNSGVKEISHTSLP. The residue at position 669 (Ser669) is a Phosphoserine. Residues 693–715 are compositionally biased toward low complexity; sequence GNKNGDNNSSNHNGEGNGPSSHS. Polar residues predominate over residues 722–731; sequence TGRTEPSKSP. Residues Lys739, Lys762, Lys777, Lys852, Lys861, and Lys873 each participate in a glycyl lysine isopeptide (Lys-Gly) (interchain with G-Cter in SUMO2) cross-link. The segment covering 761 to 777 has biased composition (basic and acidic residues); sequence EKGDFGSHGERKGRNEK. Ser900 is subject to Phosphoserine. Glycyl lysine isopeptide (Lys-Gly) (interchain with G-Cter in SUMO2) cross-links involve residues Lys949 and Lys951. The disordered stretch occupies residues 949–1065; sequence KLKSQSGQIK…GDPHHMNPHM (117 aa). Residue Lys958 forms a Glycyl lysine isopeptide (Lys-Gly) (interchain with G-Cter in SUMO1); alternate linkage. Lys958 participates in a covalent cross-link: Glycyl lysine isopeptide (Lys-Gly) (interchain with G-Cter in SUMO2); alternate. A compositionally biased stretch (basic and acidic residues) spans 974–989; that stretch reads KSGDHCHPTSIKHETY. Residue Lys985 forms a Glycyl lysine isopeptide (Lys-Gly) (interchain with G-Cter in SUMO2) linkage. A phosphoserine mark is found at Ser994 and Ser1033. A Glycyl lysine isopeptide (Lys-Gly) (interchain with G-Cter in SUMO2) cross-link involves residue Lys1043. Arg1052 carries the omega-N-methylarginine modification. A Phosphoserine modification is found at Ser1081. Glycyl lysine isopeptide (Lys-Gly) (interchain with G-Cter in SUMO2) cross-links involve residues Lys1114, Lys1126, Lys1165, Lys1201, Lys1206, Lys1211, Lys1238, Lys1259, Lys1295, and Lys1302. The tract at residues 1136 to 1372 is disordered; sequence VIAAAQHRQE…SPAKTKILPP (237 aa). The segment covering 1158 to 1170 has biased composition (basic and acidic residues); the sequence is DRVRSPLKNDKDG. Residues 1198-1219 are leucine-zipper; that stretch reads LPAKSMELKHSSQKLQESCWDL. Residues 1282–1295 carry the Nuclear localization signal motif; sequence RRRVRSFISPIPSK. 2 stretches are compositionally biased toward basic and acidic residues: residues 1305–1321 and 1332–1346; these read NADD…EGAD and HSQD…DSSK. Position 1333 is a phosphoserine (Ser1333). Lys1337 is covalently cross-linked (Glycyl lysine isopeptide (Lys-Gly) (interchain with G-Cter in SUMO2)). A Phosphoserine modification is found at Ser1363. Lys1366 participates in a covalent cross-link: Glycyl lysine isopeptide (Lys-Gly) (interchain with G-Cter in SUMO2). Ser1389 is modified (phosphoserine). The segment at 1415 to 1434 is disordered; sequence SLKSGPPEGGTVATQEAEME. Residues Lys1417, Lys1437, Lys1456, and Lys1474 each participate in a glycyl lysine isopeptide (Lys-Gly) (interchain with G-Cter in SUMO2) cross-link. The disordered stretch occupies residues 1446-1636; that stretch reads SVTNQESNVE…KQAVPIVEPQ (191 aa). The segment covering 1463 to 1479 has biased composition (basic and acidic residues); it reads EEWRGSGDDKVKTEAHV. Over residues 1481–1501 the composition is skewed to polar residues; it reads TASTGKEPSGTMTSTASQKPG. Residue Lys1538 forms a Glycyl lysine isopeptide (Lys-Gly) (interchain with G-Cter in SUMO2) linkage. Ser1550 bears the Phosphoserine mark. Lys1552 participates in a covalent cross-link: Glycyl lysine isopeptide (Lys-Gly) (interchain with G-Cter in SUMO2). Positions 1565–1579 form a DNA-binding region, a.T hook; sequence GKKKGRPIGSVNKQK. Residues 1584 to 1594 are compositionally biased toward pro residues; that stretch reads QPPPPPQPPQM. The Nuclear localization signal motif lies at 1604–1628; that stretch reads KPKKQRQRRERRKPGAQPRKRKTKQ. Positions 1606-1627 are enriched in basic residues; the sequence is KKQRQRRERRKPGAQPRKRKTK. A Glycyl lysine isopeptide (Lys-Gly) (interchain with G-Cter in SUMO2) cross-link involves residue Lys1641. Disordered stretches follow at residues 1685 to 1710 and 1760 to 1865; these read QTKL…SKVL and TLPK…GPEL. Phosphoserine is present on Ser1697. Phosphothreonine occurs at positions 1699, 1790, and 1792. Residues 1812-1819 carry the Nuclear localization signal motif; sequence RFKRRHRS. A compositionally biased stretch (polar residues) spans 1850-1859; the sequence is DTKPSVPTTS. The segment at 1856–1892 adopts a C2HC pre-PHD-type; degenerate zinc-finger fold; the sequence is PTTSEGGPELELQIPELPLDSNEFWVHEGCILWANGI. Residues 1912–1960 form a PHD-type zinc finger; sequence MKCSHCQEAGATLGCYNKGCSFRYHYPCAIDADCLLHEENFSVRCPKHK. Residues 1966–1987 are disordered; it reads PLPPLQNKTAKGSLSTEQSERG. Residues 1971–1987 are compositionally biased toward polar residues; it reads QNKTAKGSLSTEQSERG.

As to quaternary structure, homodimer. Interacts with RNF4 and JUN. Binds to the regulatory region of MMP3. In terms of tissue distribution, expressed in brain, lung, liver, kidney and testes.

The protein resides in the nucleus. Functionally, transcriptional activator that binds to the regulatory region of MMP3 and thereby controls stromelysin expression. It stimulates the activity of various transcriptional activators such as JUN, SP1, PAX6 and ETS1, suggesting a function as a coactivator. This Mus musculus (Mouse) protein is Transcription factor 20 (Tcf20).